We begin with the raw amino-acid sequence, 422 residues long: WD repeat and SOCS box-containing protein 1 (422 aa).

WD repeat units follow at residues 124 to 165, 168 to 208, 212 to 251, 254 to 293, and 309 to 346; these read SRCV…LLLN, DHTE…NMMK, GHQN…MIRK, GHYN…ILFE, and DNGR…SYPV. Residues 374 to 422 enclose the SOCS box domain; it reads NAYFWSTPKYVSSLQHLCRMAIRRVMNTNEVKKLPIPQKIMEFLTYQTM.

As to quaternary structure, component of a probable ECS E3 ubiquitin-protein ligase complex that contains the Elongin BC complex.

It participates in protein modification; protein ubiquitination. Its function is as follows. Probable substrate-recognition component of a SCF-like ECS (Elongin-Cullin-SOCS-box protein) E3 ubiquitin-protein ligase complex which mediates the ubiquitination and subsequent proteasomal degradation of target proteins. This is WD repeat and SOCS box-containing protein 1 (wsb1) from Xenopus tropicalis (Western clawed frog).